The chain runs to 192 residues: Leucine-rich repeat-containing protein 51 (192 aa).

LRR repeat units follow at residues 49 to 71 (SLTQ…NQVA), 80 to 101 (NLAW…LTTF), and 103 to 124 (NLSV…NKLA). Residues 137–175 (NPMEEEKGYRQYVLCTLSRITTFDFSGVTKADRTTAEVW) enclose the LRRCT domain.

It is found in the cytoplasm. In Homo sapiens (Human), this protein is Leucine-rich repeat-containing protein 51.